A 189-amino-acid polypeptide reads, in one-letter code: Mu-like prophage FluMu protein gp27 (189 aa).

It to phage Mu protein gp27.

This chain is Mu-like prophage FluMu protein gp27, found in Haemophilus influenzae (strain ATCC 51907 / DSM 11121 / KW20 / Rd).